The primary structure comprises 130 residues: Putative transposase for insertion sequence element IS6501 (130 aa).

This sequence belongs to the transposase 11 family.

In terms of biological role, involved in the transposition of the insertion sequence. This is Putative transposase for insertion sequence element IS6501 from Brucella ovis (strain ATCC 25840 / 63/290 / NCTC 10512).